Here is a 131-residue protein sequence, read N- to C-terminus: UPF0146 protein PH0209 (131 aa).

The protein belongs to the UPF0146 family.

The sequence is that of UPF0146 protein PH0209 from Pyrococcus horikoshii (strain ATCC 700860 / DSM 12428 / JCM 9974 / NBRC 100139 / OT-3).